A 328-amino-acid polypeptide reads, in one-letter code: Anthranilate phosphoribosyltransferase (328 aa).

Residues glycine 79, 82 to 83 (GD), threonine 87, 89 to 92 (NIST), 107 to 115 (KHGNYAVSS), and serine 119 contribute to the 5-phospho-alpha-D-ribose 1-diphosphate site. Glycine 79 provides a ligand contact to anthranilate. Residue serine 91 coordinates Mg(2+). Residue asparagine 110 participates in anthranilate binding. Arginine 165 is an anthranilate binding site. Mg(2+) contacts are provided by aspartate 223 and glutamate 224.

The protein belongs to the anthranilate phosphoribosyltransferase family. Homodimer. Mg(2+) serves as cofactor.

It carries out the reaction N-(5-phospho-beta-D-ribosyl)anthranilate + diphosphate = 5-phospho-alpha-D-ribose 1-diphosphate + anthranilate. The protein operates within amino-acid biosynthesis; L-tryptophan biosynthesis; L-tryptophan from chorismate: step 2/5. Catalyzes the transfer of the phosphoribosyl group of 5-phosphorylribose-1-pyrophosphate (PRPP) to anthranilate to yield N-(5'-phosphoribosyl)-anthranilate (PRA). The polypeptide is Anthranilate phosphoribosyltransferase (Cytophaga hutchinsonii (strain ATCC 33406 / DSM 1761 / CIP 103989 / NBRC 15051 / NCIMB 9469 / D465)).